Here is a 373-residue protein sequence, read N- to C-terminus: Dof zinc finger protein 3 (373 aa).

The disordered stretch occupies residues 1-23; it reads MASGGALSPVEEKPTVVKTTKAE. Residues 10–23 are compositionally biased toward basic and acidic residues; it reads VEEKPTVVKTTKAE. The Dof-type zinc-finger motif lies at 45 to 99; the sequence is PCCPRCNSIKTKFCYYNNYSMAQPRYFCRECRRYWTQGGSLRNVPVGGGCRKSKR. 4 residues coordinate Zn(2+): Cys47, Cys50, Cys72, and Cys75. A disordered region spans residues 297 to 327; that stretch reads ALGGADEQQGGGDGGEAVMTKDTGGGASSSA.

As to quaternary structure, interacts with RISBZ1/BZIP58.

It localises to the nucleus. Its function is as follows. Transcriptional activator that binds specifically to the DNA consensus core sequence 5'-AAAG-3' also known as prolamin box. Can activate the expression of genes encoding for the seed storage proteins glutelin, prolamin and globulin. Functions synergistically with RISBZ/BZIP58 to positively regulate quantitatively many seed storage proteins. Functions synergistically with RISBZ1/BZIP58 to positively regulate some metabolic enzymes, such as alanine aminotransferase and pyruvate phosphate dikinase, that are expressed in developing seeds. Functions synergistically with RISBZ1/BZIP58 to positively regulate genes that are key players in the development of aleurone layers. Functions synergistically with RISBZ1/BZIP58 to positively regulate the glutelin GLUD-1 gene in endosperm of developing seeds. Can activate the expression of the bifunctional lysine-degrading enzyme, lysine ketoglutarate reductase/saccharopine dehydrogenase (LKR/SDH), one of the key regulators determining free lysine content in plants. In germinating seeds, involved in the gibberellin-mediated activation of the alpha-amylase AMY1.1/AMY1A gene. This chain is Dof zinc finger protein 3, found in Oryza sativa subsp. japonica (Rice).